Here is a 609-residue protein sequence, read N- to C-terminus: UvrABC system protein C (609 aa).

The 79-residue stretch at 16 to 94 (SSAGVYRMYD…IKQYMPKYNV (79 aa)) folds into the GIY-YIG domain. One can recognise a UVR domain in the interval 203–238 (QQVISTLVAKMEQAAQQQEYEQAARFRDQIMALRKV).

The protein belongs to the UvrC family. In terms of assembly, interacts with UvrB in an incision complex.

Its subcellular location is the cytoplasm. The UvrABC repair system catalyzes the recognition and processing of DNA lesions. UvrC both incises the 5' and 3' sides of the lesion. The N-terminal half is responsible for the 3' incision and the C-terminal half is responsible for the 5' incision. This Shewanella putrefaciens (strain CN-32 / ATCC BAA-453) protein is UvrABC system protein C.